A 497-amino-acid chain; its full sequence is Zinc finger CCCH domain-containing protein 22 (497 aa).

The segment at 136–163 (SESMMICKFFMQQRCRFGSSCRSSHGLD) adopts a C3H1-type zinc-finger fold. The disordered stretch occupies residues 236–281 (AQMTDDDGEEEEEEDEQQSASDSEDSVSSDYDEGSPQGIGFLESTN). A compositionally biased stretch (acidic residues) spans 239–268 (TDDDGEEEEEEDEQQSASDSEDSVSSDYDE). The G-patch domain maps to 300-346 (TRGIASKMMASMGYREGMGLGVSGQGILNPILVKVLPAKRSLDYALE). The disordered stretch occupies residues 352-387 (ECKSEKQKKKRSRGGKRKRGKKFAEAAKAAKQEEES). Residues 357 to 372 (KQKKKRSRGGKRKRGK) are compositionally biased toward basic residues. Over residues 373–387 (KFAEAAKAAKQEEES) the composition is skewed to basic and acidic residues.

This is Zinc finger CCCH domain-containing protein 22 from Arabidopsis thaliana (Mouse-ear cress).